The sequence spans 280 residues: Elongation factor Ts (280 aa).

The tract at residues 82–85 (TDFV) is involved in Mg(2+) ion dislocation from EF-Tu.

The protein belongs to the EF-Ts family.

It is found in the cytoplasm. Its function is as follows. Associates with the EF-Tu.GDP complex and induces the exchange of GDP to GTP. It remains bound to the aminoacyl-tRNA.EF-Tu.GTP complex up to the GTP hydrolysis stage on the ribosome. This Baumannia cicadellinicola subsp. Homalodisca coagulata protein is Elongation factor Ts.